The chain runs to 648 residues: MNANPKFLSADARVDAAAVAPLPNSRKVYVTGSQPDIRVPMREITQADTPTSFGGEKNPPIYVYDTSGPYTDPDAKIDIRAGLPALRQRWIDARGDTETLAGLTSEYGRERAADPATAELRFPDLHRHPRRAKAGRNVTQMHYARQGIITPEMEFIAIRENQRRAEYLESLKASGPNGAKLAAMMGRQHAGQAFGAAAFGANEAGTNMLTEITPEFVRSEVACGRAIIPANINHPETEPMIIGRNFLVKINANIGNSAVTSSIGEEVDKMTWAIRWGGDTVMDLSTGKHIHETREWIIRNSPVPIGTVPIYQALEKVNGKAEDLTWEIFRDTLIEQAEQGVDYFTIHAGVRLQYVPLTANRMTGIVSRGGSIMAKWCLAHHKESFLYEHFEEICEIMKAYDVSFSLGDGLRPGSIYDANDEAQLGELKTLGELTQIAWKHDVQVMIEGPGHVPMQLIKENMDLQLDWCKEAPFYTLGPLTTDIAPGYDHITSGIGAAMIGWFGTAMLCYVTPKEHLGLPNKDDVKEGIITYKLAAHAADLAKGHPGAQVRDNALSKARFEFRWEDQFNLGLDPDKAREFHDETLPKDSAKVAHFCSMCGPHFCSMKITQDVREFAAQQGMSEDDALKKGMEVKAVEFVKTGSEIYHRQ.

Residues Asn-253, Met-282, Tyr-311, His-347, Ser-367–Gly-369, Asp-408–Arg-411, and Glu-447 contribute to the substrate site. His-451 contributes to the Zn(2+) binding site. Tyr-474 is a binding site for substrate. Position 515 (His-515) interacts with Zn(2+). Residues Cys-595, Cys-598, and Cys-603 each contribute to the [4Fe-4S] cluster site.

The protein belongs to the ThiC family. As to quaternary structure, homodimer. [4Fe-4S] cluster serves as cofactor.

It catalyses the reaction 5-amino-1-(5-phospho-beta-D-ribosyl)imidazole + S-adenosyl-L-methionine = 4-amino-2-methyl-5-(phosphooxymethyl)pyrimidine + CO + 5'-deoxyadenosine + formate + L-methionine + 3 H(+). The protein operates within cofactor biosynthesis; thiamine diphosphate biosynthesis. In terms of biological role, catalyzes the synthesis of the hydroxymethylpyrimidine phosphate (HMP-P) moiety of thiamine from aminoimidazole ribotide (AIR) in a radical S-adenosyl-L-methionine (SAM)-dependent reaction. This Burkholderia thailandensis (strain ATCC 700388 / DSM 13276 / CCUG 48851 / CIP 106301 / E264) protein is Phosphomethylpyrimidine synthase.